The primary structure comprises 113 residues: Large ribosomal subunit protein bL19 (113 aa).

The protein belongs to the bacterial ribosomal protein bL19 family.

Its function is as follows. This protein is located at the 30S-50S ribosomal subunit interface and may play a role in the structure and function of the aminoacyl-tRNA binding site. The polypeptide is Large ribosomal subunit protein bL19 (Carboxydothermus hydrogenoformans (strain ATCC BAA-161 / DSM 6008 / Z-2901)).